The chain runs to 322 residues: RNA-binding protein KhpB (322 aa).

The tract at residues 3–52 is jag_N domain; sequence VFEGNTVAAAIAAGLKQLHRTRDQVEVEVIAEAKKGFLGLGKHPAQVRLT. The segment covering 58 to 82 has biased composition (low complexity); sequence AAPATTPTSATATAQQSVATESTTA. The disordered stretch occupies residues 58-162; sequence AAPATTPTSA…AADQSQTPRT (105 aa). T89 carries the post-translational modification Phosphothreonine. Residues 89 to 99 show a composition bias toward polar residues; it reads TVQTPKSTPTR. Over residues 100-129 the composition is skewed to low complexity; the sequence is QAKTSQATTSAAKPATSKAKAVAKPASMAV. Positions 141 to 161 are enriched in polar residues; that stretch reads SKPATTSKTKSVAADQSQTPR. Residues 174–251 form the KH domain; it reads ETAVRALCDY…ASHVNVVLDV (78 aa). Residues 256-322 enclose the R3H domain; the sequence is ERRAATLKRL…HRAVVVAIRK (67 aa).

Forms a complex with KhpA.

Its subcellular location is the cytoplasm. A probable RNA chaperone. Forms a complex with KhpA which binds to cellular RNA and controls its expression. Plays a role in peptidoglycan (PG) homeostasis and cell length regulation. Its function is as follows. Necessary for correct cell elongation. The chain is RNA-binding protein KhpB from Lactiplantibacillus plantarum (strain ATCC BAA-793 / NCIMB 8826 / WCFS1) (Lactobacillus plantarum).